The primary structure comprises 418 residues: Light-independent protochlorophyllide reductase subunit N (418 aa).

3 residues coordinate [4Fe-4S] cluster: C17, C42, and C103.

It belongs to the BchN/ChlN family. In terms of assembly, protochlorophyllide reductase is composed of three subunits; ChlL, ChlN and ChlB. Forms a heterotetramer of two ChlB and two ChlN subunits. [4Fe-4S] cluster serves as cofactor.

The catalysed reaction is chlorophyllide a + oxidized 2[4Fe-4S]-[ferredoxin] + 2 ADP + 2 phosphate = protochlorophyllide a + reduced 2[4Fe-4S]-[ferredoxin] + 2 ATP + 2 H2O. The protein operates within porphyrin-containing compound metabolism; chlorophyll biosynthesis (light-independent). In terms of biological role, component of the dark-operative protochlorophyllide reductase (DPOR) that uses Mg-ATP and reduced ferredoxin to reduce ring D of protochlorophyllide (Pchlide) to form chlorophyllide a (Chlide). This reaction is light-independent. The NB-protein (ChlN-ChlB) is the catalytic component of the complex. The polypeptide is Light-independent protochlorophyllide reductase subunit N (Prochlorococcus marinus (strain MIT 9515)).